A 958-amino-acid polypeptide reads, in one-letter code: SLIT and NTRK-like protein 5 (958 aa).

The first 40 residues, 1–40 (MHTCCPPVTLEQDLHRKMHSWMLQTLAFAVTSLVLSCAET), serve as a signal peptide directing secretion. At 41–664 (IDYYGEICDN…GGGASSVPLS (624 aa)) the chain is on the extracellular side. LRR repeat units lie at residues 82 to 103 (PIYH…EFVN), 106 to 127 (GASI…AFHG), 130 to 151 (GLRR…TFLG), 154 to 175 (NLEY…AFGK), 178 to 199 (LLQV…LFRF), and 201 to 222 (PLTH…GLLQ). Asn103 carries an N-linked (GlcNAc...) asparagine glycan. Positions 235–286 (NPWNCSCELISLKDWLDSISYSALVGDVVCETPFRLHGRDLDEVSKQELCPR) constitute an LRRCT 1 domain. Positions 317 to 358 (ATSSSAVYKPPLKPPKGTRQPNKPRVRPTSRQPSKDLGYSNY) are disordered. Residues 365–407 (QTKSPVPLECPTACSCNLQISDLGLNVNCQERKIESIAELQPK) form the LRRNT domain. LRR repeat units follow at residues 410 to 431 (NPKK…DFLE), 434 to 455 (GLDL…AFGD), 458 to 479 (NLRR…LFYG), 482 to 503 (SLQY…TFDP), 506 to 527 (NLQL…VFSG), and 529 to 550 (TLLR…GVLD). The LRRCT 2 domain occupies 563-614 (NPWDCTCDIVGMKLWVEQLKVGVLVDEVICKAPKKFAETDMRSIKSELLCPD). A glycan (N-linked (GlcNAc...) asparagine) is linked at Asn644. Residues 665–685 (VLILSLLLVFIMSVFVAAGLF) form a helical membrane-spanning segment. Residues 686 to 958 (VLVMKRRKKN…LEKQTTFSQF (273 aa)) lie on the Cytoplasmic side of the membrane. The interval 789–844 (NHHLQQQQQPPPPPQQPQQQPPPQLQLQPGEEERRESHHLRSPAYSVSTIEPREDL) is disordered. Positions 797-812 (QPPPPPQQPQQQPPPQ) are enriched in pro residues.

It belongs to the SLITRK family. As to expression, expressed predominantly in the cerebral cortex of the brain but also at low levels in the spinal cord and medulla.

It is found in the membrane. Suppresses neurite outgrowth. This is SLIT and NTRK-like protein 5 (SLITRK5) from Homo sapiens (Human).